The following is a 453-amino-acid chain: Bifunctional protein GlmU (453 aa).

Residues 1–225 (MNIVILAAGT…EWETLGVNSK (225 aa)) are pyrophosphorylase. Residues 6 to 9 (LAAG), lysine 20, glutamine 71, 76 to 77 (GT), 98 to 100 (YGD), glycine 135, glutamate 150, asparagine 165, and asparagine 223 contribute to the UDP-N-acetyl-alpha-D-glucosamine site. Aspartate 100 lines the Mg(2+) pocket. Asparagine 223 is a Mg(2+) binding site. The linker stretch occupies residues 226 to 246 (AQLAELERIHQRTIADALLVD). An N-acetyltransferase region spans residues 247–453 (GVTLADPARV…GYVRPVKKKS (207 aa)). The UDP-N-acetyl-alpha-D-glucosamine site is built by arginine 329 and lysine 347. Histidine 359 functions as the Proton acceptor in the catalytic mechanism. Positions 362 and 373 each coordinate UDP-N-acetyl-alpha-D-glucosamine. Residues alanine 376, 382–383 (NY), serine 401, and alanine 419 each bind acetyl-CoA.

In the N-terminal section; belongs to the N-acetylglucosamine-1-phosphate uridyltransferase family. It in the C-terminal section; belongs to the transferase hexapeptide repeat family. As to quaternary structure, homotrimer. Mg(2+) serves as cofactor.

The protein resides in the cytoplasm. It carries out the reaction alpha-D-glucosamine 1-phosphate + acetyl-CoA = N-acetyl-alpha-D-glucosamine 1-phosphate + CoA + H(+). The enzyme catalyses N-acetyl-alpha-D-glucosamine 1-phosphate + UTP + H(+) = UDP-N-acetyl-alpha-D-glucosamine + diphosphate. The protein operates within nucleotide-sugar biosynthesis; UDP-N-acetyl-alpha-D-glucosamine biosynthesis; N-acetyl-alpha-D-glucosamine 1-phosphate from alpha-D-glucosamine 6-phosphate (route II): step 2/2. It participates in nucleotide-sugar biosynthesis; UDP-N-acetyl-alpha-D-glucosamine biosynthesis; UDP-N-acetyl-alpha-D-glucosamine from N-acetyl-alpha-D-glucosamine 1-phosphate: step 1/1. Its pathway is bacterial outer membrane biogenesis; LPS lipid A biosynthesis. In terms of biological role, catalyzes the last two sequential reactions in the de novo biosynthetic pathway for UDP-N-acetylglucosamine (UDP-GlcNAc). The C-terminal domain catalyzes the transfer of acetyl group from acetyl coenzyme A to glucosamine-1-phosphate (GlcN-1-P) to produce N-acetylglucosamine-1-phosphate (GlcNAc-1-P), which is converted into UDP-GlcNAc by the transfer of uridine 5-monophosphate (from uridine 5-triphosphate), a reaction catalyzed by the N-terminal domain. This Burkholderia ambifaria (strain MC40-6) protein is Bifunctional protein GlmU.